The following is a 112-amino-acid chain: Notch-regulated ankyrin repeat-containing protein A (112 aa).

ANK repeat units lie at residues 48–77 (EGQT…DIRL) and 81–110 (EGWS…YSSG).

This sequence belongs to the NRARP family.

Functionally, regulates independently canonical Wnt and Notch signaling by modulating LEF1 and Notch protein turnover. Stabilizes LEF1, a pivotal transcription factor in the Wnt signaling cascade, by blocking its ubiquitination. Involved in angiogenesis; involved in intersegmental vessel patterning during development. In Danio rerio (Zebrafish), this protein is Notch-regulated ankyrin repeat-containing protein A (nrarpa).